A 153-amino-acid chain; its full sequence is Superoxide dismutase [Cu-Zn] (153 aa).

His-45, His-47, and His-62 together coordinate Cu cation. The cysteines at positions 56 and 145 are disulfide-linked. Residues His-62, His-70, His-79, and Asp-82 each contribute to the Zn(2+) site. Residue His-119 participates in Cu cation binding.

The protein belongs to the Cu-Zn superoxide dismutase family. As to quaternary structure, homodimer. Cu cation is required as a cofactor. The cofactor is Zn(2+).

It localises to the cytoplasm. The catalysed reaction is 2 superoxide + 2 H(+) = H2O2 + O2. Destroys radicals which are normally produced within the cells and which are toxic to biological systems. This is Superoxide dismutase [Cu-Zn] from Ceratitis capitata (Mediterranean fruit fly).